Here is a 341-residue protein sequence, read N- to C-terminus: S-adenosylmethionine:tRNA ribosyltransferase-isomerase (341 aa).

This sequence belongs to the QueA family. As to quaternary structure, monomer.

It localises to the cytoplasm. It carries out the reaction 7-aminomethyl-7-carbaguanosine(34) in tRNA + S-adenosyl-L-methionine = epoxyqueuosine(34) in tRNA + adenine + L-methionine + 2 H(+). It participates in tRNA modification; tRNA-queuosine biosynthesis. Its function is as follows. Transfers and isomerizes the ribose moiety from AdoMet to the 7-aminomethyl group of 7-deazaguanine (preQ1-tRNA) to give epoxyqueuosine (oQ-tRNA). This chain is S-adenosylmethionine:tRNA ribosyltransferase-isomerase, found in Alkaliphilus metalliredigens (strain QYMF).